The following is a 434-amino-acid chain: MRFFRRKIAIIVILAYAIFSLYAAYNVFFSKRVISRVHRVVKKGSVIIETGKAGEKEWNPWEEDERAHSVVVQKRRDAFRLYRDQAAKNRPKTYKVQIWGKAAIGLYLWEHILEGSLNPSDKSSQWREGEIQSGKIHFSFYTGPAVVQGHVPPDTDSVVLVLNGREQQKISYSVQWLQHVQSLIQARTISRVAVVLLGNEQCNNNWISPYLKRNGGFVDLLFLVYDSPWVNDKDIFQWPLGVATYRHFPVVTLSSQMVKKDRPYLCNFLGTIYKNSSRESLMNLLKQNNMEKDCLMHAREKWLPQETSDTSRQYQMALAQSDLTLCPVGVNSECYRIYEACAYGSVPVVEDVLTPGACAVGNRSPLRLLKDAGAPFIFLKDWKELPVILERERAMSQKEKTERRMRLLEWYSSFRQQMKDRFTEVLEENFFKIT.

Topologically, residues 1–7 are cytoplasmic; sequence MRFFRRK. A helical; Signal-anchor for type II membrane protein transmembrane segment spans residues 8–28; it reads IAIIVILAYAIFSLYAAYNVF. Residues 29–434 lie on the Extracellular side of the membrane; it reads FSKRVISRVH…VLEENFFKIT (406 aa).

Belongs to the TMEM5 family.

It is found in the golgi apparatus membrane. It carries out the reaction 3-O-[Rib-ol-P-Rib-ol-P-3-beta-D-GalNAc-(1-&gt;3)-beta-D-GlcNAc-(1-&gt;4)-(O-6-P-alpha-D-Man)]-Thr-[protein] + UDP-alpha-D-xylose = 3-O-[beta-D-Xyl-(1-&gt;4)-Rib-ol-P-Rib-ol-P-3-beta-D-GalNAc-(1-&gt;3)-beta-D-GlcNAc-(1-&gt;4)-(O-6-P-alpha-D-Man)]-Thr-[protein] + UDP + H(+). The protein operates within protein modification; protein glycosylation. Acts as a UDP-D-xylose:ribitol-5-phosphate beta1,4-xylosyltransferase, which catalyzes the transfer of UDP-D-xylose to ribitol 5-phosphate (Rbo5P) to form the Xylbeta1-4Rbo5P linkage on O-mannosyl glycan. Participates in the biosynthesis of the phosphorylated O-mannosyl trisaccharide (N-acetylgalactosamine-beta-3-N-acetylglucosamine-beta-4-(phosphate-6-)mannose), a carbohydrate structure present in alpha-dystroglycan (DAG1), which is required for binding laminin G-like domain-containing extracellular proteins with high affinity. The sequence is that of Ribitol-5-phosphate xylosyltransferase 1 (rxylt1) from Danio rerio (Zebrafish).